We begin with the raw amino-acid sequence, 923 residues long: Isoleucine--tRNA ligase (923 aa).

The short motif at 57–67 (PYANGDIHMGH) is the 'HIGH' region element. An L-isoleucyl-5'-AMP-binding site is contributed by E553. Residues 594–598 (KMSKS) carry the 'KMSKS' region motif. K597 is an ATP binding site. Residues C888, C891, C908, and C911 each contribute to the Zn(2+) site.

It belongs to the class-I aminoacyl-tRNA synthetase family. IleS type 1 subfamily. In terms of assembly, monomer. Requires Zn(2+) as cofactor.

It localises to the cytoplasm. It carries out the reaction tRNA(Ile) + L-isoleucine + ATP = L-isoleucyl-tRNA(Ile) + AMP + diphosphate. Functionally, catalyzes the attachment of isoleucine to tRNA(Ile). As IleRS can inadvertently accommodate and process structurally similar amino acids such as valine, to avoid such errors it has two additional distinct tRNA(Ile)-dependent editing activities. One activity is designated as 'pretransfer' editing and involves the hydrolysis of activated Val-AMP. The other activity is designated 'posttransfer' editing and involves deacylation of mischarged Val-tRNA(Ile). The sequence is that of Isoleucine--tRNA ligase from Shouchella clausii (strain KSM-K16) (Alkalihalobacillus clausii).